The chain runs to 236 residues: UPF0257 lipoprotein YnfC (236 aa).

Residues M1–G16 form the signal peptide. C17 is lipidated: N-palmitoyl cysteine. The S-diacylglycerol cysteine moiety is linked to residue C17.

This sequence belongs to the UPF0257 family.

It localises to the cell membrane. The chain is UPF0257 lipoprotein YnfC from Escherichia coli O157:H7.